Consider the following 274-residue polypeptide: Dermonecrotic toxin SdSicTox-betaIIB1ai (274 aa).

His5 is an active-site residue. 2 residues coordinate Mg(2+): Glu25 and Asp27. Catalysis depends on His41, which acts as the Nucleophile. Disulfide bonds link Cys45/Cys51 and Cys47/Cys190. Asp85 lines the Mg(2+) pocket.

Belongs to the arthropod phospholipase D family. Class II subfamily. The cofactor is Mg(2+). Expressed by the venom gland.

Its subcellular location is the secreted. It catalyses the reaction an N-(acyl)-sphingosylphosphocholine = an N-(acyl)-sphingosyl-1,3-cyclic phosphate + choline. The catalysed reaction is an N-(acyl)-sphingosylphosphoethanolamine = an N-(acyl)-sphingosyl-1,3-cyclic phosphate + ethanolamine. The enzyme catalyses a 1-acyl-sn-glycero-3-phosphocholine = a 1-acyl-sn-glycero-2,3-cyclic phosphate + choline. It carries out the reaction a 1-acyl-sn-glycero-3-phosphoethanolamine = a 1-acyl-sn-glycero-2,3-cyclic phosphate + ethanolamine. Its function is as follows. Dermonecrotic toxins cleave the phosphodiester linkage between the phosphate and headgroup of certain phospholipids (sphingolipid and lysolipid substrates), forming an alcohol (often choline) and a cyclic phosphate. This toxin acts on sphingomyelin (SM). It may also act on ceramide phosphoethanolamine (CPE), lysophosphatidylcholine (LPC) and lysophosphatidylethanolamine (LPE), but not on lysophosphatidylserine (LPS), and lysophosphatidylglycerol (LPG). It acts by transphosphatidylation, releasing exclusively cyclic phosphate products as second products. Induces dermonecrosis, hemolysis, increased vascular permeability, edema, inflammatory response, and platelet aggregation. This is Dermonecrotic toxin SdSicTox-betaIIB1ai from Sicarius cf. damarensis (strain GJB-2008) (Six-eyed sand spider).